The primary structure comprises 201 residues: FMN-dependent NADH:quinone oxidoreductase (201 aa).

FMN-binding positions include serine 10, 16-18 (SQS), 96-99 (MYNF), and 140-143 (SRGG).

It belongs to the azoreductase type 1 family. As to quaternary structure, homodimer. The cofactor is FMN.

It catalyses the reaction 2 a quinone + NADH + H(+) = 2 a 1,4-benzosemiquinone + NAD(+). The catalysed reaction is N,N-dimethyl-1,4-phenylenediamine + anthranilate + 2 NAD(+) = 2-(4-dimethylaminophenyl)diazenylbenzoate + 2 NADH + 2 H(+). Its function is as follows. Quinone reductase that provides resistance to thiol-specific stress caused by electrophilic quinones. In terms of biological role, also exhibits azoreductase activity. Catalyzes the reductive cleavage of the azo bond in aromatic azo compounds to the corresponding amines. This Escherichia coli O6:K15:H31 (strain 536 / UPEC) protein is FMN-dependent NADH:quinone oxidoreductase.